The chain runs to 554 residues: Terpene synthase 17 (554 aa).

D306, D310, and E458 together coordinate Mg(2+). Positions 306 to 310 (DDTYD) match the DDXXD motif motif.

This sequence belongs to the terpene synthase family. Tpsa subfamily. The cofactor is Mg(2+). It depends on Mn(2+) as a cofactor.

It catalyses the reaction (2E,6E)-farnesyl diphosphate = (+)-valencene + diphosphate. The enzyme catalyses (2E,6E)-farnesyl diphosphate = (E)-beta-farnesene + diphosphate. It carries out the reaction (2E,6E)-farnesyl diphosphate = gamma-gurjunene + diphosphate. The catalysed reaction is (2Z,6Z)-farnesyl diphosphate = beta-bisabolene + diphosphate. It catalyses the reaction (2Z,6Z)-farnesyl diphosphate = (E)-gamma-bisabolene + diphosphate. The enzyme catalyses (2E)-geranyl diphosphate = limonene + diphosphate. It carries out the reaction (2E)-geranyl diphosphate = beta-myrcene + diphosphate. The catalysed reaction is (2E)-geranyl diphosphate = (E)-beta-ocimene + diphosphate. It catalyses the reaction (2E)-geranyl diphosphate = terpinolene + diphosphate. The enzyme catalyses (2E)-geranyl diphosphate = gamma-terpinene + diphosphate. It carries out the reaction (2Z,6Z)-farnesyl diphosphate = (Z)-gamma-bisabolene + diphosphate. The catalysed reaction is (2E,6E)-farnesyl diphosphate = (1S,5S,6R)-alpha-bergamotene + diphosphate. It catalyses the reaction (2Z,6Z)-farnesyl diphosphate = (1S,5S,6S)-alpha-bergamotene + diphosphate. It participates in secondary metabolite biosynthesis; terpenoid biosynthesis. In terms of biological role, sesquiterpene synthase involved in the biosynthesis of volatile compounds. Mediates the conversion of (2E,6E)-farnesyl diphosphate (FPP) into gamma-gurjunene, (E)-beta-farnesene and (+)-valencene, and of (2Z,6Z)-farnesyl diphosphate ((ZZ)-FPP) into (E)-alpha-bergamotene and (Z)-gamma-bisabolene as well as beta-bisabolene, (Z)-alpha-bergamotene and (E)-gamma-bisabolene to a lower extent. Can act with a low efficiency as a monoterpene synthase with geranyl diphosphate (GPP) as substrate, thus producing beta-myrcene, (E)-beta-ocimene, limonene, terpinolene, gamma-terpinene and (Z)-beta-ocimene. In Solanum habrochaites (Wild tomato), this protein is Terpene synthase 17.